Consider the following 326-residue polypeptide: 4-hydroxy-3-methylbut-2-enyl diphosphate reductase (326 aa).

Residue Cys-22 coordinates [4Fe-4S] cluster. The (2E)-4-hydroxy-3-methylbut-2-enyl diphosphate site is built by His-51 and His-84. Dimethylallyl diphosphate is bound by residues His-51 and His-84. Positions 51 and 84 each coordinate isopentenyl diphosphate. Cys-106 is a [4Fe-4S] cluster binding site. His-134 provides a ligand contact to (2E)-4-hydroxy-3-methylbut-2-enyl diphosphate. His-134 is a binding site for dimethylallyl diphosphate. His-134 serves as a coordination point for isopentenyl diphosphate. Glu-136 acts as the Proton donor in catalysis. Position 174 (Thr-174) interacts with (2E)-4-hydroxy-3-methylbut-2-enyl diphosphate. Cys-204 contributes to the [4Fe-4S] cluster binding site. Positions 232, 233, 234, and 276 each coordinate (2E)-4-hydroxy-3-methylbut-2-enyl diphosphate. Residues Ser-232, Ser-233, Asn-234, and Ser-276 each coordinate dimethylallyl diphosphate. Residues Ser-232, Ser-233, Asn-234, and Ser-276 each contribute to the isopentenyl diphosphate site.

The protein belongs to the IspH family. [4Fe-4S] cluster serves as cofactor.

It catalyses the reaction isopentenyl diphosphate + 2 oxidized [2Fe-2S]-[ferredoxin] + H2O = (2E)-4-hydroxy-3-methylbut-2-enyl diphosphate + 2 reduced [2Fe-2S]-[ferredoxin] + 2 H(+). The catalysed reaction is dimethylallyl diphosphate + 2 oxidized [2Fe-2S]-[ferredoxin] + H2O = (2E)-4-hydroxy-3-methylbut-2-enyl diphosphate + 2 reduced [2Fe-2S]-[ferredoxin] + 2 H(+). It functions in the pathway isoprenoid biosynthesis; dimethylallyl diphosphate biosynthesis; dimethylallyl diphosphate from (2E)-4-hydroxy-3-methylbutenyl diphosphate: step 1/1. The protein operates within isoprenoid biosynthesis; isopentenyl diphosphate biosynthesis via DXP pathway; isopentenyl diphosphate from 1-deoxy-D-xylulose 5-phosphate: step 6/6. In terms of biological role, catalyzes the conversion of 1-hydroxy-2-methyl-2-(E)-butenyl 4-diphosphate (HMBPP) into a mixture of isopentenyl diphosphate (IPP) and dimethylallyl diphosphate (DMAPP). Acts in the terminal step of the DOXP/MEP pathway for isoprenoid precursor biosynthesis. The protein is 4-hydroxy-3-methylbut-2-enyl diphosphate reductase of Bordetella bronchiseptica (strain ATCC BAA-588 / NCTC 13252 / RB50) (Alcaligenes bronchisepticus).